The following is a 1088-amino-acid chain: DNA-directed RNA polymerase subunit beta (1088 aa).

It belongs to the RNA polymerase beta chain family. In terms of assembly, in plastids the minimal PEP RNA polymerase catalytic core is composed of four subunits: alpha, beta, beta', and beta''. When a (nuclear-encoded) sigma factor is associated with the core the holoenzyme is formed, which can initiate transcription.

It localises to the plastid. The protein localises to the chloroplast. The enzyme catalyses RNA(n) + a ribonucleoside 5'-triphosphate = RNA(n+1) + diphosphate. DNA-dependent RNA polymerase catalyzes the transcription of DNA into RNA using the four ribonucleoside triphosphates as substrates. This Chlorokybus atmophyticus (Soil alga) protein is DNA-directed RNA polymerase subunit beta.